Consider the following 203-residue polypeptide: Ribosomal RNA large subunit methyltransferase E (203 aa).

Residues Gly-51, Trp-53, Asp-69, Asp-85, and Asp-108 each contribute to the S-adenosyl-L-methionine site. The active-site Proton acceptor is Lys-148.

It belongs to the class I-like SAM-binding methyltransferase superfamily. RNA methyltransferase RlmE family.

The protein localises to the cytoplasm. It catalyses the reaction uridine(2552) in 23S rRNA + S-adenosyl-L-methionine = 2'-O-methyluridine(2552) in 23S rRNA + S-adenosyl-L-homocysteine + H(+). Its function is as follows. Specifically methylates the uridine in position 2552 of 23S rRNA at the 2'-O position of the ribose in the fully assembled 50S ribosomal subunit. This chain is Ribosomal RNA large subunit methyltransferase E, found in Methanosphaerula palustris (strain ATCC BAA-1556 / DSM 19958 / E1-9c).